Consider the following 322-residue polypeptide: UDP-N-acetylenolpyruvoylglucosamine reductase (322 aa).

The FAD-binding PCMH-type domain maps to 36-202 (RAGGPAQVLF…TSVLFEGVPG (167 aa)). The active site involves Arg182. Ser231 acts as the Proton donor in catalysis. Residue Glu301 is part of the active site.

The protein belongs to the MurB family. Requires FAD as cofactor.

Its subcellular location is the cytoplasm. It catalyses the reaction UDP-N-acetyl-alpha-D-muramate + NADP(+) = UDP-N-acetyl-3-O-(1-carboxyvinyl)-alpha-D-glucosamine + NADPH + H(+). It participates in cell wall biogenesis; peptidoglycan biosynthesis. Functionally, cell wall formation. The sequence is that of UDP-N-acetylenolpyruvoylglucosamine reductase from Brucella melitensis biotype 2 (strain ATCC 23457).